A 247-amino-acid polypeptide reads, in one-letter code: Uridylate kinase (247 aa).

18 to 21 (KLSG) serves as a coordination point for ATP. Residue Gly-60 coordinates UMP. Positions 61 and 65 each coordinate ATP. Residues Asp-80 and 141 to 148 (TGNPFFTT) each bind UMP. Positions 168, 174, and 177 each coordinate ATP.

This sequence belongs to the UMP kinase family. In terms of assembly, homohexamer.

The protein resides in the cytoplasm. The enzyme catalyses UMP + ATP = UDP + ADP. It functions in the pathway pyrimidine metabolism; CTP biosynthesis via de novo pathway; UDP from UMP (UMPK route): step 1/1. Inhibited by UTP. Functionally, catalyzes the reversible phosphorylation of UMP to UDP. In Pseudomonas savastanoi pv. phaseolicola (strain 1448A / Race 6) (Pseudomonas syringae pv. phaseolicola (strain 1448A / Race 6)), this protein is Uridylate kinase.